The chain runs to 416 residues: MEPMSNKQDSNSSEGDEKGWPDVPKRKRKNSQCSMKSMSALSVSVPGYIPSYLEKDEPCVVCGDKATGYHYRCITCEGCKGFFRRTIQKNLHPSYSCKYEGCCIIDKITRNQCQLCRFKKCISVGMAMDLVLDDSKRVAKRRLIEENREKRKREEMVRTLQIRPEPDTAEWELIRMATDAHRHTNAQGSSWKQKRKFLSDDIGQSPMVPTSDGDKVDLEAFSEFTKIMTPAITRVVDFAKKLPMFSELPCEDQIILLKGCCMEIMSLRAAVRYDPDSETLTLNSEMAVKREQLKNGGLGVVSDAIFDLGKELGQFNLDDTEVALMQAVLLMSSDRSGHQCMEKIEQCQEAYLLAFEHYINYRKHNIPHFWPKLLMKVTDLRMIGACHASRFLHMKVECPSELFPPLFLEVFEDQEV.

Positions 1–13 (MEPMSNKQDSNSS) are enriched in polar residues. Residues 1 to 37 (MEPMSNKQDSNSSEGDEKGWPDVPKRKRKNSQCSMKS) form a disordered region. The modulating stretch occupies residues 1-58 (MEPMSNKQDSNSSEGDEKGWPDVPKRKRKNSQCSMKSMSALSVSVPGYIPSYLEKDEP). A compositionally biased stretch (basic and acidic residues) spans 15-24 (GDEKGWPDVP). 2 NR C4-type zinc fingers span residues 59–79 (CVVC…CEGC) and 97–121 (CKYE…FKKC). The nuclear receptor DNA-binding region spans 59–126 (CVVCGDKATG…RFKKCISVGM (68 aa)). The 245-residue stretch at 169–413 (AEWELIRMAT…PPLFLEVFED (245 aa)) folds into the NR LBD domain.

Belongs to the nuclear hormone receptor family. NR1 subfamily.

It localises to the nucleus. High affinity receptor for triiodothyronine. This is Thyroid hormone receptor alpha-A (thra1) from Paralichthys olivaceus (Bastard halibut).